The sequence spans 790 residues: Phenylalanine--tRNA ligase beta subunit (790 aa).

The region spanning Pro39–Cys154 is the tRNA-binding domain. The B5 domain occupies Phe404 to Pro483. Residues Asp457, Asp463, Glu466, and Glu467 each coordinate Mg(2+). The region spanning Pro694–Ser790 is the FDX-ACB domain.

It belongs to the phenylalanyl-tRNA synthetase beta subunit family. Type 1 subfamily. As to quaternary structure, tetramer of two alpha and two beta subunits. It depends on Mg(2+) as a cofactor.

It localises to the cytoplasm. The catalysed reaction is tRNA(Phe) + L-phenylalanine + ATP = L-phenylalanyl-tRNA(Phe) + AMP + diphosphate + H(+). This Chlamydia trachomatis serovar D (strain ATCC VR-885 / DSM 19411 / UW-3/Cx) protein is Phenylalanine--tRNA ligase beta subunit (pheT).